Here is a 464-residue protein sequence, read N- to C-terminus: Probable 1,4-beta-D-glucan cellobiohydrolase C (464 aa).

The signal sequence occupies residues 1-19; sequence MKNFAPSLALSLLLPTVQA. In terms of domain architecture, CBM1 spans 20–55; the sequence is QQTMWGQCGGAGWSGATDCVAGGVCSTQNAYYAQCL. Disulfide bonds link Cys27-Cys44 and Cys38-Cys54. Positions 59 to 102 are thr-rich linker; sequence TTATTLSTTSKGTTTTTTSSTTSTGGGSSSTTTKTSTSAGPTVT. A compositionally biased stretch (low complexity) spans 65–100; that stretch reads STTSKGTTTTTTSSTTSTGGGSSSTTTKTSTSAGPT. The interval 65–108 is disordered; that stretch reads STTSKGTTTTTTSSTTSTGGGSSSTTTKTSTSAGPTVTGSPSGN. Residues 103-464 form a catalytic region; that stretch reads GSPSGNPFSG…QLLTNANPAF (362 aa). Residue Asp194 is part of the active site. Disulfide bonds link Cys195-Cys254 and Cys386-Cys433. The active-site Proton donor is the Asp240. Asp419 (nucleophile) is an active-site residue.

This sequence belongs to the glycosyl hydrolase 6 (cellulase B) family.

It is found in the secreted. The enzyme catalyses Hydrolysis of (1-&gt;4)-beta-D-glucosidic linkages in cellulose and cellotetraose, releasing cellobiose from the non-reducing ends of the chains.. In terms of biological role, the biological conversion of cellulose to glucose generally requires three types of hydrolytic enzymes: (1) Endoglucanases which cut internal beta-1,4-glucosidic bonds; (2) Exocellobiohydrolases that cut the disaccharide cellobiose from the non-reducing end of the cellulose polymer chain; (3) Beta-1,4-glucosidases which hydrolyze the cellobiose and other short cello-oligosaccharides to glucose. In Aspergillus clavatus (strain ATCC 1007 / CBS 513.65 / DSM 816 / NCTC 3887 / NRRL 1 / QM 1276 / 107), this protein is Probable 1,4-beta-D-glucan cellobiohydrolase C (cbhC).